The following is a 77-amino-acid chain: Acyl carrier protein (77 aa).

Residues Met1–Glu76 enclose the Carrier domain. At Ser36 the chain carries O-(pantetheine 4'-phosphoryl)serine.

The protein belongs to the acyl carrier protein (ACP) family. 4'-phosphopantetheine is transferred from CoA to a specific serine of apo-ACP by AcpS. This modification is essential for activity because fatty acids are bound in thioester linkage to the sulfhydryl of the prosthetic group.

It localises to the cytoplasm. The protein operates within lipid metabolism; fatty acid biosynthesis. Functionally, carrier of the growing fatty acid chain in fatty acid biosynthesis. The polypeptide is Acyl carrier protein (Staphylococcus saprophyticus subsp. saprophyticus (strain ATCC 15305 / DSM 20229 / NCIMB 8711 / NCTC 7292 / S-41)).